We begin with the raw amino-acid sequence, 325 residues long: Elongation factor P--(R)-beta-lysine ligase (325 aa).

76–78 (SPE) contributes to the substrate binding site. Residues 100 to 102 (RNE) and Asn-109 contribute to the ATP site. Position 118 (Tyr-118) interacts with substrate. 244–245 (EL) lines the ATP pocket. Substrate is bound at residue Glu-251. Gly-300 lines the ATP pocket.

The protein belongs to the class-II aminoacyl-tRNA synthetase family. EpmA subfamily. In terms of assembly, homodimer.

The enzyme catalyses D-beta-lysine + L-lysyl-[protein] + ATP = N(6)-((3R)-3,6-diaminohexanoyl)-L-lysyl-[protein] + AMP + diphosphate + H(+). In terms of biological role, with EpmB is involved in the beta-lysylation step of the post-translational modification of translation elongation factor P (EF-P). Catalyzes the ATP-dependent activation of (R)-beta-lysine produced by EpmB, forming a lysyl-adenylate, from which the beta-lysyl moiety is then transferred to the epsilon-amino group of a conserved specific lysine residue in EF-P. This Erwinia tasmaniensis (strain DSM 17950 / CFBP 7177 / CIP 109463 / NCPPB 4357 / Et1/99) protein is Elongation factor P--(R)-beta-lysine ligase.